We begin with the raw amino-acid sequence, 216 residues long: Ras-related protein RABE1c (216 aa).

Position 22-29 (22-29 (GDSGVGKS)) interacts with GTP. Positions 44–52 (FITTIGIDF) match the Effector region motif. GTP is bound by residues 70–74 (DTAGQ), 128–131 (NKAD), and 159–160 (SA). 2 S-geranylgeranyl cysteine lipidation sites follow: Cys-213 and Cys-214.

The protein belongs to the small GTPase superfamily. Rab family. As to quaternary structure, interacts with PI5K2.

Its subcellular location is the golgi apparatus membrane. The protein localises to the cell membrane. In terms of biological role, involved in membrane trafficking from the Golgi to the plasma membrane. This Arabidopsis thaliana (Mouse-ear cress) protein is Ras-related protein RABE1c (RABE1C).